The primary structure comprises 810 residues: DNA replication licensing factor mcm-6 (810 aa).

The MCM domain maps to 346–553 (IEKNIVDSLF…VTDYAIARRI (208 aa)). Residues serine 400, threonine 401, alanine 402, lysine 403, serine 404, and asparagine 505 each contribute to the ATP site. The Arginine finger motif lies at 529 to 532 (SRFD). Residues arginine 622 and glutamate 625 each coordinate ADP. Residues 685 to 705 (KENQGGDDDMEHDGEKDETAK) form a disordered region.

It belongs to the MCM family. Component of the mcm2-7 complex. The complex forms a toroidal hexameric ring with the proposed subunit order mcm2-mcm6-mcm4-mcm7-mcm3-mcm5 (By simililarity).

Its subcellular location is the nucleus. The catalysed reaction is ATP + H2O = ADP + phosphate + H(+). Acts as a component of the MCM2-7 complex (MCM complex) which is the replicative helicase essential for 'once per cell cycle' DNA replication initiation and elongation in eukaryotic cells. Core component of CDC45-MCM-GINS (CMG) helicase, the molecular machine that unwinds template DNA during replication, and around which the replisome is built. The active ATPase sites in the MCM2-7 ring are formed through the interaction surfaces of two neighboring subunits such that a critical structure of a conserved arginine finger motif is provided in trans relative to the ATP-binding site of the Walker A box of the adjacent subunit. The six ATPase active sites, however, are likely to contribute differentially to the complex helicase activity. This is DNA replication licensing factor mcm-6 from Caenorhabditis briggsae.